Here is a 616-residue protein sequence, read N- to C-terminus: Dihydroxy-acid dehydratase (616 aa).

D81 provides a ligand contact to Mg(2+). C122 is a binding site for [2Fe-2S] cluster. Residues D123 and K124 each contribute to the Mg(2+) site. K124 is subject to N6-carboxylysine. C195 is a binding site for [2Fe-2S] cluster. E491 contacts Mg(2+). The Proton acceptor role is filled by S517.

It belongs to the IlvD/Edd family. In terms of assembly, homodimer. [2Fe-2S] cluster serves as cofactor. Mg(2+) is required as a cofactor.

It catalyses the reaction (2R)-2,3-dihydroxy-3-methylbutanoate = 3-methyl-2-oxobutanoate + H2O. The catalysed reaction is (2R,3R)-2,3-dihydroxy-3-methylpentanoate = (S)-3-methyl-2-oxopentanoate + H2O. The protein operates within amino-acid biosynthesis; L-isoleucine biosynthesis; L-isoleucine from 2-oxobutanoate: step 3/4. It participates in amino-acid biosynthesis; L-valine biosynthesis; L-valine from pyruvate: step 3/4. Its function is as follows. Functions in the biosynthesis of branched-chain amino acids. Catalyzes the dehydration of (2R,3R)-2,3-dihydroxy-3-methylpentanoate (2,3-dihydroxy-3-methylvalerate) into 2-oxo-3-methylpentanoate (2-oxo-3-methylvalerate) and of (2R)-2,3-dihydroxy-3-methylbutanoate (2,3-dihydroxyisovalerate) into 2-oxo-3-methylbutanoate (2-oxoisovalerate), the penultimate precursor to L-isoleucine and L-valine, respectively. The polypeptide is Dihydroxy-acid dehydratase (Yersinia enterocolitica serotype O:8 / biotype 1B (strain NCTC 13174 / 8081)).